The chain runs to 236 residues: Uridylate kinase (236 aa).

12–15 (KISG) provides a ligand contact to ATP. Residues 20 to 25 (GKKGFG) form an involved in allosteric activation by GTP region. UMP is bound at residue G54. The ATP site is built by G55 and R59. Residues D72 and 133–140 (TGNPYFST) contribute to the UMP site. Residues Y166 and D169 each coordinate ATP.

The protein belongs to the UMP kinase family. As to quaternary structure, homohexamer.

Its subcellular location is the cytoplasm. The catalysed reaction is UMP + ATP = UDP + ADP. It functions in the pathway pyrimidine metabolism; CTP biosynthesis via de novo pathway; UDP from UMP (UMPK route): step 1/1. Allosterically activated by GTP. Inhibited by UTP. Functionally, catalyzes the reversible phosphorylation of UMP to UDP. The sequence is that of Uridylate kinase from Clostridium novyi (strain NT).